Reading from the N-terminus, the 348-residue chain is 3-isopropylmalate dehydrogenase (348 aa).

76-87 serves as a coordination point for NAD(+); sequence GPKWTDPNNRPE. Arginine 94, arginine 104, arginine 132, and aspartate 217 together coordinate substrate. Mg(2+)-binding residues include aspartate 217, aspartate 241, and aspartate 245. Residue 275 to 287 coordinates NAD(+); sequence GSAPDIAGKNVAN.

This sequence belongs to the isocitrate and isopropylmalate dehydrogenases family. LeuB type 1 subfamily. As to quaternary structure, homodimer. Mg(2+) is required as a cofactor. It depends on Mn(2+) as a cofactor.

Its subcellular location is the cytoplasm. The enzyme catalyses (2R,3S)-3-isopropylmalate + NAD(+) = 4-methyl-2-oxopentanoate + CO2 + NADH. Its pathway is amino-acid biosynthesis; L-leucine biosynthesis; L-leucine from 3-methyl-2-oxobutanoate: step 3/4. Catalyzes the oxidation of 3-carboxy-2-hydroxy-4-methylpentanoate (3-isopropylmalate) to 3-carboxy-4-methyl-2-oxopentanoate. The product decarboxylates to 4-methyl-2 oxopentanoate. This Staphylococcus aureus (strain bovine RF122 / ET3-1) protein is 3-isopropylmalate dehydrogenase.